The chain runs to 240 residues: Probable peptide export permease protein YydJ (240 aa).

6 helical membrane-spanning segments follow: residues 13-33 (VIII…FLLV), 50-70 (SYTV…AFFI), 97-117 (IAVL…IISL), 126-146 (ALLL…IGTI), 153-173 (ILIS…LVAI), and 210-230 (VLFI…VLRF).

The complex is composed of 2 ATP-binding proteins (YydI), two transmembrane proteins (YydJ).

The protein resides in the cell membrane. Functionally, suggested to be part of an ABC transporter complex YydIJ involved in export of the modified peptide YydF. This chain is Probable peptide export permease protein YydJ (yydJ), found in Bacillus subtilis (strain 168).